Consider the following 501-residue polypeptide: Aldehyde dehydrogenase 1A1 (501 aa).

N-acetylserine is present on S2. N6-acetyllysine occurs at positions 91 and 128. Residues 167–170 (IPWN), 193–196 (KPAE), 226–227 (GP), and 246–247 (GS) contribute to the NAD(+) site. K252 carries the N6-acetyllysine modification. E269 (proton acceptor) is an active-site residue. 269–271 (ELG) lines the NAD(+) pocket. C303 acts as the Nucleophile in catalysis. Residues 336-501 (LTQGINQGPQ…VAMKISQKNS (166 aa)) form a mediates interaction with PRMT3 region. A Phosphothreonine modification is found at T337. NAD(+) is bound at residue 349-353 (EQHDK). N6-acetyllysine is present on residues K353 and K367. 400 to 402 (EIF) contacts NAD(+). K410 carries the post-translational modification N6-acetyllysine. S413 carries the phosphoserine modification. N6-acetyllysine is present on residues K419, K435, and K495.

This sequence belongs to the aldehyde dehydrogenase family. Homotetramer. Interacts with PRMT3; the interaction is direct, inhibits ALDH1A1 aldehyde dehydrogenase activity and is independent of the methyltransferase activity of PRMT3. The N-terminus is blocked most probably by acetylation. Strongly expressed in kidney, lung, testis, intestine, stomach, and trachea, but weakly in the liver.

Its subcellular location is the cytoplasm. The protein resides in the cytosol. It is found in the cell projection. The protein localises to the axon. It catalyses the reaction an aldehyde + NAD(+) + H2O = a carboxylate + NADH + 2 H(+). The catalysed reaction is all-trans-retinal + NAD(+) + H2O = all-trans-retinoate + NADH + 2 H(+). It carries out the reaction 9-cis-retinal + NAD(+) + H2O = 9-cis-retinoate + NADH + 2 H(+). The enzyme catalyses 11-cis-retinal + NAD(+) + H2O = 11-cis-retinoate + NADH + 2 H(+). It catalyses the reaction 13-cis-retinal + NAD(+) + H2O = 13-cis-retinoate + NADH + 2 H(+). The catalysed reaction is 3-deoxyglucosone + NAD(+) + H2O = 2-dehydro-3-deoxy-D-gluconate + NADH + 2 H(+). It carries out the reaction (E)-4-hydroxynon-2-enal + NAD(+) + H2O = (E)-4-hydroxynon-2-enoate + NADH + 2 H(+). The enzyme catalyses malonaldehyde + NAD(+) + H2O = 3-oxopropanoate + NADH + 2 H(+). It catalyses the reaction hexanal + NAD(+) + H2O = hexanoate + NADH + 2 H(+). The catalysed reaction is propanal + NAD(+) + H2O = propanoate + NADH + 2 H(+). It carries out the reaction acetaldehyde + NAD(+) + H2O = acetate + NADH + 2 H(+). The enzyme catalyses benzaldehyde + NAD(+) + H2O = benzoate + NADH + 2 H(+). It catalyses the reaction 4-aminobutanal + NAD(+) + H2O = 4-aminobutanoate + NADH + 2 H(+). It participates in cofactor metabolism; retinol metabolism. Inhibited by chloral hydrate. Cytosolic dehydrogenase that catalyzes the irreversible oxidation of a wide range of aldehydes to their corresponding carboxylic acid. Functions downstream of retinol dehydrogenases and catalyzes the oxidation of retinaldehyde into retinoic acid, the second step in the oxidation of retinol/vitamin A into retinoic acid. This pathway is crucial to control the levels of retinol and retinoic acid, two important molecules which excess can be teratogenic and cytotoxic. Also oxidizes aldehydes resulting from lipid peroxidation like (E)-4-hydroxynon-2-enal/HNE, malonaldehyde and hexanal that form protein adducts and are highly cytotoxic. By participating for instance to the clearance of (E)-4-hydroxynon-2-enal/HNE in the lens epithelium prevents the formation of HNE-protein adducts and lens opacification. Functions also downstream of fructosamine-3-kinase in the fructosamine degradation pathway by catalyzing the oxidation of 3-deoxyglucosone, the carbohydrate product of fructosamine 3-phosphate decomposition, which is itself a potent glycating agent that may react with lysine and arginine side-chains of proteins. Also has an aminobutyraldehyde dehydrogenase activity and is probably part of an alternative pathway for the biosynthesis of GABA/4-aminobutanoate in midbrain, thereby playing a role in GABAergic synaptic transmission. The polypeptide is Aldehyde dehydrogenase 1A1 (Rattus norvegicus (Rat)).